The primary structure comprises 561 residues: Putative cuticle collagen 145 (561 aa).

The signal sequence occupies residues 1 to 30 (MEKILVTLSTGAASIAVLAVLFTIPSLYNT). Positions 100–112 (TCPPGPPGPPGQP) are enriched in pro residues. Disordered regions lie at residues 100 to 134 (TCPP…TYAP), 148 to 271 (PQGP…PGGP), 367 to 398 (TCPP…NTAT), and 422 to 540 (TGPA…GPGL). 2 triple-helical region regions span residues 102 to 127 (PPGP…KGED) and 153 to 276 (GPEG…LPGN). Low complexity-rich tracts occupy residues 164 to 209 (AGPD…PGQD) and 219 to 265 (APGA…DGQP). Residues 367–379 (TCPPGPPGPPGQP) are compositionally biased toward pro residues. A triple-helical region region spans residues 413 to 544 (KCPQGPAGPT…PGGPGLPGND (132 aa)). Low complexity-rich tracts occupy residues 422–467 (TGPA…PGQD) and 486–532 (APGA…DGQP). The 59-residue stretch at 485–543 (GAPGAPGNAGPAGPAGQDGFPGQDGQPGPAGPAGQDGFPGNAGSDGQPGAPGGPGLPGN) folds into the Collagen-like domain.

Belongs to the cuticular collagen family. As to quaternary structure, collagen polypeptide chains are complexed within the cuticle by disulfide bonds and other types of covalent cross-links.

In terms of biological role, nematode cuticles are composed largely of collagen-like proteins. The cuticle functions both as an exoskeleton and as a barrier to protect the worm from its environment. This Caenorhabditis briggsae protein is Putative cuticle collagen 145.